The chain runs to 313 residues: L-lactate dehydrogenase 1 (313 aa).

NAD(+) contacts are provided by V15, D36, R41, and Y66. Substrate is bound by residues Q83, R89, and 121 to 124; that span reads NPVD. NAD(+)-binding positions include 119 to 121 and S144; that span reads ASN. 149–152 contacts substrate; sequence DTAR. 2 residues coordinate beta-D-fructose 1,6-bisphosphate: R154 and H169. The active-site Proton acceptor is H176. Y218 carries the post-translational modification Phosphotyrosine. T227 provides a ligand contact to substrate.

It belongs to the LDH/MDH superfamily. LDH family. Homotetramer.

It is found in the cytoplasm. It catalyses the reaction (S)-lactate + NAD(+) = pyruvate + NADH + H(+). It functions in the pathway fermentation; pyruvate fermentation to lactate; (S)-lactate from pyruvate: step 1/1. With respect to regulation, allosterically activated by fructose 1,6-bisphosphate (FBP). Catalyzes the conversion of lactate to pyruvate. This chain is L-lactate dehydrogenase 1, found in Listeria monocytogenes serotype 4b (strain F2365).